Here is a 435-residue protein sequence, read N- to C-terminus: GTPase Der (435 aa).

2 consecutive EngA-type G domains span residues 4-167 and 175-350; these read PTLA…PSED and IKFS…ENQT. Residues 10–17, 57–61, 119–122, 181–188, 228–232, and 293–296 each bind GTP; these read GRPNVGKS, DTGGI, NKVD, DTAGI, and NKWD. The KH-like domain occupies 351–435; it reads RRIQSSVLND…PIHIIARKRK (85 aa).

Belongs to the TRAFAC class TrmE-Era-EngA-EngB-Septin-like GTPase superfamily. EngA (Der) GTPase family. As to quaternary structure, associates with the 50S ribosomal subunit.

GTPase that plays an essential role in the late steps of ribosome biogenesis. In Lacticaseibacillus casei (strain BL23) (Lactobacillus casei), this protein is GTPase Der.